Consider the following 1736-residue polypeptide: Collagen alpha-2(XI) chain (1736 aa).

A signal peptide spans 1–27; the sequence is MERCSRCHRLLLFLPLVLGLSAAPGWA. The 172-residue stretch at 57–228 folds into the Laminin G-like domain; sequence DVAYRVARPA…QSCGQKDLEC (172 aa). The segment at 215–486 is nonhelical region; it reads QAAYQSCGQK…ILQQARLALR (272 aa). 3 disordered regions span residues 228 to 270, 364 to 465, and 485 to 1538; these read CERE…PTES, LSAE…DKGP, and LRGP…GSPA. The segment covering 258 to 269 has biased composition (polar residues); the sequence is PQSQEPQKQPTE. 3 Collagen-like domains span residues 399-447, 487-545, and 546-583; these read GPPG…GPPG, GPPG…ADGA, and RGMPGEPGMKGDRGFDGLPGLPGEKGQRGDTGAQGLPG. The interval 487–1500 is triple-helical region; that stretch reads GPPGPMGYTG…PGHPGPPGEV (1014 aa). The segment covering 497-533 has biased composition (low complexity); sequence RPGPLGQPGSPGLKGESGDLGPQGPRGPQGLTGPPGK. Positions 615 to 624 are enriched in pro residues; that stretch reads KGPPGIPGPP. Residues 650–668 are compositionally biased toward low complexity; the sequence is QQGTPGAQGLPGPQGAIGP. Residues 682–737 form the Collagen-like 4 domain; that stretch reads GMPGSDGLPGHPGKEGPPGTKGNQGPSGPQGPLGYPGPRGVKGVDGIRGLKGHKGE. The segment covering 765-774 has biased composition (basic and acidic residues); it reads RGEDGPEGPK. Low complexity-rich tracts occupy residues 776–789 and 842–861; these read RTGPTGDPGPTGLM and PTGPRGQRGPRGATGKSGAK. 5 Collagen-like domains span residues 868-924, 967-1025, 1026-1055, 1056-1086, and 1114-1172; these read GPHG…PGPP, GDPG…AAGS, GGPIGPPGRPGPQGPPGAAGEKGVPGEKGP, IGPTGRDGVQGPVGLPGPAGPPGVAGEDGDK, and GPVG…ETGD. The segment covering 994–1003 has biased composition (gly residues); the sequence is GTAGGPGLKG. The segment covering 1029–1040 has biased composition (pro residues); the sequence is IGPPGRPGPQGP. Low complexity-rich tracts occupy residues 1115–1133 and 1155–1164; these read PVGQPGAAGADGEPGARGP and IGLQGLPGPS. A compositionally biased stretch (pro residues) spans 1176 to 1187; sequence MGPPGPPGPRGP. Residues 1188 to 1197 are compositionally biased toward low complexity; the sequence is AGPNGADGPQ. Positions 1198 to 1207 are enriched in gly residues; sequence GSPGGVGNLG. Positions 1217 to 1230 are enriched in low complexity; it reads ESGSPGVQGEPGVK. The segment covering 1232–1241 has biased composition (basic and acidic residues); sequence PRGERGEKGE. A compositionally biased stretch (low complexity) spans 1256–1272; it reads PTGDNGPKGNPGPVGFP. A compositionally biased stretch (basic and acidic residues) spans 1287–1296; that stretch reads DGAKGDRGED. Positions 1376 to 1386 are enriched in low complexity; it reads QQGRPGATGQA. Composition is skewed to pro residues over residues 1388–1397 and 1457–1467; these read PPGPVGPPGL and PGGPPGLPGPS. 2 consecutive Collagen-like domains span residues 1393 to 1447 and 1448 to 1499; these read GPPG…GETG and IPGA…PPGE. A compositionally biased stretch (low complexity) spans 1469–1481; that stretch reads PKGAKGATGPAGP. A propeptide spans 1501 to 1736 (C-terminal propeptide); the sequence is IQPLPIQMPK…VLLGPVCFMG (236 aa). In terms of domain architecture, Fibrillar collagen NC1 spans 1541-1735; that stretch reads EEIFGSLDSL…GVLLGPVCFM (195 aa). A disulfide bridge connects residues Cys1571 and Cys1603. 5 residues coordinate Ca(2+): Asp1589, Asn1591, Gln1592, Cys1594, and Asp1597. N-linked (GlcNAc...) asparagine glycosylation is present at Asn1604. Cystine bridges form between Cys1612–Cys1733 and Cys1655–Cys1689.

Belongs to the fibrillar collagen family. In terms of assembly, trimers composed of three different chains: alpha 1(XI), alpha 2(XI), and alpha 3(XI). Alpha 3(XI) is a post-translational modification of alpha 1(II). Alpha 1(V) can also be found instead of alpha 3(XI)=1(II). In terms of processing, prolines at the third position of the tripeptide repeating unit (G-X-Y) are hydroxylated in some or all of the chains.

It is found in the secreted. The protein localises to the extracellular space. The protein resides in the extracellular matrix. Its function is as follows. May play an important role in fibrillogenesis by controlling lateral growth of collagen II fibrils. In Mus musculus (Mouse), this protein is Collagen alpha-2(XI) chain (Col11a2).